We begin with the raw amino-acid sequence, 84 residues long: Anaphase-promoting complex subunit 11 (84 aa).

Zn(2+)-binding residues include cysteine 23, cysteine 26, cysteine 34, cysteine 37, cysteine 44, cysteine 51, histidine 53, histidine 56, histidine 58, cysteine 59, cysteine 73, and cysteine 76. The segment at cysteine 34–arginine 77 adopts an RING-type zinc-finger fold.

The protein belongs to the RING-box family. In terms of assembly, the mammalian APC/C is composed at least of 14 distinct subunits ANAPC1, ANAPC2, CDC27/APC3, ANAPC4, ANAPC5, CDC16/APC6, ANAPC7, CDC23/APC8, ANAPC10, ANAPC11, CDC26/APC12, ANAPC13, ANAPC15 and ANAPC16 that assemble into a complex of at least 19 chains with a combined molecular mass of around 1.2 MDa; APC/C interacts with FZR1 and FBXO5. Interacts with the cullin domain of ANAPC2. Interacts with UBE2D2. Post-translationally, auto-ubiquitinated.

It localises to the cytoplasm. It is found in the nucleus. It functions in the pathway protein modification; protein ubiquitination. Functionally, together with the cullin protein ANAPC2, constitutes the catalytic component of the anaphase promoting complex/cyclosome (APC/C), a cell cycle-regulated E3 ubiquitin ligase that controls progression through mitosis and the G1 phase of the cell cycle. The APC/C complex acts by mediating ubiquitination and subsequent degradation of target proteins: it mainly mediates the formation of 'Lys-11'-linked polyubiquitin chains and, to a lower extent, the formation of 'Lys-48'- and 'Lys-63'-linked polyubiquitin chains. The APC/C complex catalyzes assembly of branched 'Lys-11'-/'Lys-48'-linked branched ubiquitin chains on target proteins. May recruit the E2 ubiquitin-conjugating enzymes to the complex. This chain is Anaphase-promoting complex subunit 11 (Anapc11), found in Mus musculus (Mouse).